The following is a 243-amino-acid chain: MSKTHFGFESVEETEKAKKVAGVFHSVASNYDLMNDLMSAGMHRAWKAFTIAQANVRPGFKVLDIAAGTGDLTRAFAKAAGPTGEVWHTDINESMLRVGRDRLLDKGVVTPSLLCDAEKLPFPNNYFDVVTVAFGLRNMTHKDAALAEMRRVAKPGGRVMVLEFSKVWEPLKKAYDLYSFKVLPWLGDRFAKDADSYRYLAESIRMHPDQDTLKTMMEQAGLDAVKYYNLSGGVVALHVGSKY.

Residues threonine 69, aspartate 90, and 116 to 117 each bind S-adenosyl-L-methionine; that span reads DA.

Belongs to the class I-like SAM-binding methyltransferase superfamily. MenG/UbiE family.

It carries out the reaction a 2-demethylmenaquinol + S-adenosyl-L-methionine = a menaquinol + S-adenosyl-L-homocysteine + H(+). The catalysed reaction is a 2-methoxy-6-(all-trans-polyprenyl)benzene-1,4-diol + S-adenosyl-L-methionine = a 5-methoxy-2-methyl-3-(all-trans-polyprenyl)benzene-1,4-diol + S-adenosyl-L-homocysteine + H(+). It participates in quinol/quinone metabolism; menaquinone biosynthesis; menaquinol from 1,4-dihydroxy-2-naphthoate: step 2/2. Its pathway is cofactor biosynthesis; ubiquinone biosynthesis. Its function is as follows. Methyltransferase required for the conversion of demethylmenaquinol (DMKH2) to menaquinol (MKH2) and the conversion of 2-polyprenyl-6-methoxy-1,4-benzoquinol (DDMQH2) to 2-polyprenyl-3-methyl-6-methoxy-1,4-benzoquinol (DMQH2). This is Ubiquinone/menaquinone biosynthesis C-methyltransferase UbiE from Burkholderia vietnamiensis (strain G4 / LMG 22486) (Burkholderia cepacia (strain R1808)).